The sequence spans 304 residues: Sulfate adenylyltransferase subunit 2 (304 aa).

It belongs to the PAPS reductase family. CysD subfamily. Heterodimer composed of CysD, the smaller subunit, and CysNC.

The catalysed reaction is sulfate + ATP + H(+) = adenosine 5'-phosphosulfate + diphosphate. It participates in sulfur metabolism; hydrogen sulfide biosynthesis; sulfite from sulfate: step 1/3. With CysN forms the ATP sulfurylase (ATPS) that catalyzes the adenylation of sulfate producing adenosine 5'-phosphosulfate (APS) and diphosphate, the first enzymatic step in sulfur assimilation pathway. APS synthesis involves the formation of a high-energy phosphoric-sulfuric acid anhydride bond driven by GTP hydrolysis by CysN coupled to ATP hydrolysis by CysD. This is Sulfate adenylyltransferase subunit 2 from Xylella fastidiosa (strain 9a5c).